The sequence spans 276 residues: Protein-glutamine gamma-glutamyltransferase (276 aa).

It belongs to the bacillus TGase family.

The catalysed reaction is L-glutaminyl-[protein] + L-lysyl-[protein] = [protein]-L-lysyl-N(6)-5-L-glutamyl-[protein] + NH4(+). Its function is as follows. Probably plays a role in the assembly of the spore coat proteins by catalyzing epsilon-(gamma-glutamyl)lysine cross-links. This chain is Protein-glutamine gamma-glutamyltransferase, found in Bacillus mycoides (strain KBAB4) (Bacillus weihenstephanensis).